We begin with the raw amino-acid sequence, 193 residues long: Superoxide dismutase [Fe] (193 aa).

Residues H27, H74, D157, and H161 each contribute to the Fe cation site.

This sequence belongs to the iron/manganese superoxide dismutase family. Monomer. It depends on Fe cation as a cofactor.

It catalyses the reaction 2 superoxide + 2 H(+) = H2O2 + O2. Functionally, destroys superoxide anion radicals which are normally produced within the cells and which are toxic to biological systems. Involved in the metabolism of 4-aminophenol. May have an indirect role in hydroxyquinol metabolism by scavenging and detoxifying reactive species that promote its auto-oxidation. This is Superoxide dismutase [Fe] from Burkholderia sp.